A 1196-amino-acid polypeptide reads, in one-letter code: Major DNA-binding protein (1196 aa).

A zinc finger lies at 499-512; it reads CNLCTFDTRHACVH. 2 short sequence motifs (required for filament formation) span residues 843–844 and 1142–1144; these read FW and FNF. A disordered region spans residues 1158–1196; sequence GGPGAPGPAFAGRKRAFHGDDPFGEGPPDKKGDLTLDML. A required for nuclear localization region spans residues 1170-1196; it reads RKRAFHGDDPFGEGPPDKKGDLTLDML. Basic and acidic residues predominate over residues 1174-1196; it reads FHGDDPFGEGPPDKKGDLTLDML.

The protein belongs to the herpesviridae major DNA-binding protein family. As to quaternary structure, homooligomers. Forms double-helical filaments necessary for the formation of replication compartments within the host nucleus. Interacts with the origin-binding protein. Interacts with the helicase primase complex; this interaction stimulates primer synthesis activity of the helicase-primase complex. Interacts with the DNA polymerase. Interacts with the alkaline exonuclease; this interaction increases its nuclease processivity.

The protein resides in the host nucleus. Functionally, plays several crucial roles in viral infection. Participates in the opening of the viral DNA origin to initiate replication by interacting with the origin-binding protein. May disrupt loops, hairpins and other secondary structures present on ssDNA to reduce and eliminate pausing of viral DNA polymerase at specific sites during elongation. Promotes viral DNA recombination by performing strand-transfer, characterized by the ability to transfer a DNA strand from a linear duplex to a complementary single-stranded DNA circle. Can also catalyze the renaturation of complementary single strands. Additionally, reorganizes the host cell nucleus, leading to the formation of prereplicative sites and replication compartments. This process is driven by the protein which can form double-helical filaments in the absence of DNA. In Homo sapiens (Human), this protein is Major DNA-binding protein.